We begin with the raw amino-acid sequence, 483 residues long: Regulatory protein ViaA (483 aa).

Belongs to the ViaA family. As to quaternary structure, homodimer. Interacts with RavA.

It localises to the cytoplasm. In terms of biological role, component of the RavA-ViaA chaperone complex, which may act on the membrane to optimize the function of some of the respiratory chains. ViaA stimulates the ATPase activity of RavA. The protein is Regulatory protein ViaA of Salmonella choleraesuis (strain SC-B67).